Consider the following 437-residue polypeptide: Putative ankyrin repeat protein FPV014 (437 aa).

ANK repeat units follow at residues 32–61, 65–94, 99–128, 131–160, 164–195, 197–226, and 230–259; these read YGCSLLHCAVENGNTEIARILLLEGANPDL, STPTALHRAVILRHYDIVNLLMEFNVDPDN, ESRTPLEYAVKLNDVKMTKTLLDYGADAED, RFNCPINDAAANGNLEICKLLIDAGARINS, GSVYTIHHAIRSGNYELVVELLSRGALPDVED, LSFSSLHHAVMEGSADMVLTLLEHGASVDV, and CGRTPLFLAANASELDIVKVLLDFWADTSV.

In Fowlpox virus (strain NVSL) (FPV), this protein is Putative ankyrin repeat protein FPV014.